Consider the following 173-residue polypeptide: Co-chaperone protein HscB homolog (173 aa).

Residues 5-77 enclose the J domain; it reads CHYALFDLQP…PRRARYLLAI (73 aa).

This sequence belongs to the HscB family. Interacts with HscA and stimulates its ATPase activity.

Functionally, co-chaperone involved in the maturation of iron-sulfur cluster-containing proteins. Seems to help targeting proteins to be folded toward HscA. This chain is Co-chaperone protein HscB homolog, found in Pseudomonas putida (strain ATCC 700007 / DSM 6899 / JCM 31910 / BCRC 17059 / LMG 24140 / F1).